A 35-amino-acid chain; its full sequence is Tamulustoxin-2 (35 aa).

Disulfide bonds link C2–C22, C7–C31, and C11–C33.

It belongs to the short scorpion toxin superfamily. Potassium channel inhibitor family. As to expression, expressed by the venom gland.

It is found in the secreted. In terms of biological role, blocks Kv1.6/KCNA6 potassium channels. The protein is Tamulustoxin-2 of Hottentotta tamulus (Eastern Indian scorpion).